A 263-amino-acid polypeptide reads, in one-letter code: Superoxide dismutase [Fe] 3, chloroplastic (263 aa).

Residues 1 to 41 (MSSCVVTTSCFYTISDSSIRLKSPKLLNLSNQQRRRSLRSR) constitute a chloroplast transit peptide. His74, His127, Asp211, and His215 together coordinate Fe cation.

This sequence belongs to the iron/manganese superoxide dismutase family. In terms of assembly, homodimer. Heterodimer with FSD2. Interacts with MRL7. Fe cation is required as a cofactor.

Its subcellular location is the plastid. It is found in the chloroplast thylakoid. It carries out the reaction 2 superoxide + 2 H(+) = H2O2 + O2. With respect to regulation, activated by cpn20/cpn21 (in vitro). Destroys superoxide anion radicals which are normally produced within the cells and which are toxic to biological systems. Plays important role in chloroplast development, particularly in the maintenance of thylakoids membranes. Seems to act as a heterodimer with FSD2. The chain is Superoxide dismutase [Fe] 3, chloroplastic from Arabidopsis thaliana (Mouse-ear cress).